Consider the following 454-residue polypeptide: Mediator of RNA polymerase II transcription subunit 1 (454 aa).

The protein belongs to the Mediator complex subunit 1 family. In terms of assembly, component of the Mediator complex.

The protein localises to the nucleus. In terms of biological role, component of the Mediator complex, a coactivator involved in the regulated transcription of nearly all RNA polymerase II-dependent genes. Mediator functions as a bridge to convey information from gene-specific regulatory proteins to the basal RNA polymerase II transcription machinery. Mediator is recruited to promoters by direct interactions with regulatory proteins and serves as a scaffold for the assembly of a functional preinitiation complex with RNA polymerase II and the general transcription factors. This Schizosaccharomyces pombe (strain 972 / ATCC 24843) (Fission yeast) protein is Mediator of RNA polymerase II transcription subunit 1 (med1).